The sequence spans 215 residues: MKILVTGFDPFGGDKINPAIEAVKRLPAEINGAEIIKLEIPTVFNKSAEVVKKAIEKEKPDYVLNVGQAGGRFGLTPERVAININDGRIPDNEGYQPLGEPIHEDGETAYFTQLPIKAEAKAIRDAGLPASVSNTAGTYVCNHIMYQVQYMRDKEFPNIKAGFIHIPFLPEQVVNRPNTPSMALGDIVKGLTAALSAIVERDGKGDIKAVEGANH.

Active-site residues include E78, C141, and H165.

Belongs to the peptidase C15 family. In terms of assembly, homotetramer.

It localises to the cytoplasm. The enzyme catalyses Release of an N-terminal pyroglutamyl group from a polypeptide, the second amino acid generally not being Pro.. Functionally, removes 5-oxoproline from various penultimate amino acid residues except L-proline. In Lactobacillus johnsonii (strain CNCM I-12250 / La1 / NCC 533), this protein is Pyrrolidone-carboxylate peptidase.